The sequence spans 1377 residues: DNA-directed RNA polymerase subunit beta'' (1377 aa).

Residues cysteine 220, cysteine 291, cysteine 298, and cysteine 301 each coordinate Zn(2+).

The protein belongs to the RNA polymerase beta' chain family. RpoC2 subfamily. As to quaternary structure, in plastids the minimal PEP RNA polymerase catalytic core is composed of four subunits: alpha, beta, beta', and beta''. When a (nuclear-encoded) sigma factor is associated with the core the holoenzyme is formed, which can initiate transcription. Zn(2+) serves as cofactor.

The protein resides in the plastid. Its subcellular location is the chloroplast. The catalysed reaction is RNA(n) + a ribonucleoside 5'-triphosphate = RNA(n+1) + diphosphate. Its function is as follows. DNA-dependent RNA polymerase catalyzes the transcription of DNA into RNA using the four ribonucleoside triphosphates as substrates. This Nandina domestica (Heavenly bamboo) protein is DNA-directed RNA polymerase subunit beta''.